A 148-amino-acid chain; its full sequence is Lipid droplet organization protein LDO16 (148 aa).

Over 1–7 (MVSTATF) the chain is Cytoplasmic. Residues 8-28 (FFFVYLTLFVVIGFFSSLFII) form a helical membrane-spanning segment. Position 29 (Pro-29) is a topological domain, lumenal. A helical transmembrane segment spans residues 30–50 (LLGISFVFAIGVVSFGFCSNM). The Cytoplasmic segment spans residues 51 to 148 (SFKMAQLIYV…NKAGNKFQLS (98 aa)). Positions 83 to 110 (QEPQEPLSTLRPVSNPTIPSPLRQTARP) are disordered. Over residues 93–109 (RPVSNPTIPSPLRQTAR) the composition is skewed to polar residues. The residue at position 102 (Ser-102) is a Phosphoserine.

This sequence belongs to the OSW5 family. As to quaternary structure, interacts specifically with the seipin complex FLD1-LDB16. Only a fraction appears to associate with the seipin core components, suggesting that it may be an ancillary subunit of the complex. Found to interact with many mitochondrial and peroxisomal proteins.

It localises to the endoplasmic reticulum membrane. Its subcellular location is the lipid droplet. Functionally, involved in lipid droplet (LD) organization. Functions primarily upon nutrient depletion, facilitating LD consumption by lipophagy. Required for correct LD distribution during entry into stationary phase, where LDs accumulate at nucleus-vacuole junction (NVJ) contact sites. Involved in membrane interaction in a manner similar to those of SNARE proteins, binding to partners present in mitochondria or peroxisomes. Its partner on the mitochondrion side might be TOM22, a mitochondrial outer membrane protein, linking lipid droplets and mitochondria by protein-protein interaction. Involved in spore wall assembly. The protein is Lipid droplet organization protein LDO16 of Saccharomyces cerevisiae (strain ATCC 204508 / S288c) (Baker's yeast).